A 74-amino-acid polypeptide reads, in one-letter code: Protein krueppel (74 aa).

4 consecutive C2H2-type zinc fingers follow at residues 1–4 (ERTH), 10–32 (FKCP…MRLH), 38–60 (YHCS…LRVH), and 66–74 (YTCEICKAK).

This sequence belongs to the krueppel C2H2-type zinc-finger protein family.

It localises to the nucleus. In terms of biological role, krueppel is a gap class segmentation protein. In Bradysia coprophila (Dark-winged fungus gnat), this protein is Protein krueppel (Kr).